A 292-amino-acid polypeptide reads, in one-letter code: NAD kinase (292 aa).

D73 functions as the Proton acceptor in the catalytic mechanism. NAD(+) is bound by residues 73-74, 147-148, H158, R175, D177, 188-193, and Q247; these read DG, NE, and TAYSLS.

Belongs to the NAD kinase family. A divalent metal cation is required as a cofactor.

It is found in the cytoplasm. The catalysed reaction is NAD(+) + ATP = ADP + NADP(+) + H(+). Functionally, involved in the regulation of the intracellular balance of NAD and NADP, and is a key enzyme in the biosynthesis of NADP. Catalyzes specifically the phosphorylation on 2'-hydroxyl of the adenosine moiety of NAD to yield NADP. The protein is NAD kinase of Salmonella dublin (strain CT_02021853).